The primary structure comprises 347 residues: Doublecortin domain-containing protein 2C (347 aa).

Doublecortin domains lie at 16-98 (KTIL…LDYI) and 136-217 (RYIN…IPYW). Residues 235 to 260 (KYTQTKKRVESKVKEPLQNDSVPPRS) form a disordered region. The segment covering 241 to 251 (KRVESKVKEPL) has biased composition (basic and acidic residues).

It is found in the cell projection. Its subcellular location is the cilium. The protein localises to the flagellum. The protein resides in the cytoplasm. This is Doublecortin domain-containing protein 2C from Mus musculus (Mouse).